Here is a 352-residue protein sequence, read N- to C-terminus: Putative killer cell immunoglobulin-like receptor-like protein KIR3DX1 (352 aa).

An N-terminal signal peptide occupies residues 1-16 (MAPKLITVLCLGFCLN). Ig-like C2-type domains follow at residues 17–112 (QKIC…NSLK) and 224–311 (PSLS…VTRC). 2 disulfide bridges follow: Cys49-Cys94 and Cys244-Cys295. N-linked (GlcNAc...) asparagine glycosylation is present at Asn78.

Expressed in NK-cells.

It localises to the secreted. The sequence is that of Putative killer cell immunoglobulin-like receptor-like protein KIR3DX1 (KIR3DX1) from Homo sapiens (Human).